Reading from the N-terminus, the 368-residue chain is NAD(P)H-quinone oxidoreductase subunit 1, chloroplastic (368 aa).

The next 9 helical transmembrane spans lie at 27–47 (FLWI…GVLV), 97–117 (WLFN…YLVI), 130–150 (IGVF…LMAG), 166–186 (AAQS…IALL), 204–224 (FLSW…IASL), 249–269 (YSGM…LVSS), 270–290 (LFVT…FSLF), 305–325 (VISI…FLFI), and 348–368 (FLLP…LFLL).

The protein belongs to the complex I subunit 1 family. As to quaternary structure, NDH is composed of at least 16 different subunits, 5 of which are encoded in the nucleus.

The protein resides in the plastid. It localises to the chloroplast thylakoid membrane. The enzyme catalyses a plastoquinone + NADH + (n+1) H(+)(in) = a plastoquinol + NAD(+) + n H(+)(out). The catalysed reaction is a plastoquinone + NADPH + (n+1) H(+)(in) = a plastoquinol + NADP(+) + n H(+)(out). NDH shuttles electrons from NAD(P)H:plastoquinone, via FMN and iron-sulfur (Fe-S) centers, to quinones in the photosynthetic chain and possibly in a chloroplast respiratory chain. The immediate electron acceptor for the enzyme in this species is believed to be plastoquinone. Couples the redox reaction to proton translocation, and thus conserves the redox energy in a proton gradient. The protein is NAD(P)H-quinone oxidoreductase subunit 1, chloroplastic of Marchantia polymorpha (Common liverwort).